Here is a 183-residue protein sequence, read N- to C-terminus: Glutathione-regulated potassium-efflux system ancillary protein KefG (183 aa).

Belongs to the NAD(P)H dehydrogenase (quinone) family. KefG subfamily. As to quaternary structure, interacts with KefB.

Its subcellular location is the cell inner membrane. The catalysed reaction is a quinone + NADH + H(+) = a quinol + NAD(+). It carries out the reaction a quinone + NADPH + H(+) = a quinol + NADP(+). Functionally, regulatory subunit of a potassium efflux system that confers protection against electrophiles. Required for full activity of KefB. The chain is Glutathione-regulated potassium-efflux system ancillary protein KefG from Pectobacterium atrosepticum (strain SCRI 1043 / ATCC BAA-672) (Erwinia carotovora subsp. atroseptica).